The chain runs to 647 residues: DNA mismatch repair protein MutL (647 aa).

The interval 377-396 is disordered; that stretch reads EEPQAVKQSAQLWQPPKQEW. The segment covering 387-396 has biased composition (low complexity); it reads QLWQPPKQEW.

It belongs to the DNA mismatch repair MutL/HexB family.

Its function is as follows. This protein is involved in the repair of mismatches in DNA. It is required for dam-dependent methyl-directed DNA mismatch repair. May act as a 'molecular matchmaker', a protein that promotes the formation of a stable complex between two or more DNA-binding proteins in an ATP-dependent manner without itself being part of a final effector complex. The polypeptide is DNA mismatch repair protein MutL (Bacillus cereus (strain AH187)).